Here is a 429-residue protein sequence, read N- to C-terminus: Light-independent protochlorophyllide reductase subunit N (429 aa).

[4Fe-4S] cluster contacts are provided by Cys-32, Cys-57, and Cys-118.

It belongs to the BchN/ChlN family. As to quaternary structure, protochlorophyllide reductase is composed of three subunits; BchL, BchN and BchB. Forms a heterotetramer of two BchB and two BchN subunits. [4Fe-4S] cluster is required as a cofactor.

It carries out the reaction chlorophyllide a + oxidized 2[4Fe-4S]-[ferredoxin] + 2 ADP + 2 phosphate = protochlorophyllide a + reduced 2[4Fe-4S]-[ferredoxin] + 2 ATP + 2 H2O. The protein operates within porphyrin-containing compound metabolism; bacteriochlorophyll biosynthesis (light-independent). Its function is as follows. Component of the dark-operative protochlorophyllide reductase (DPOR) that uses Mg-ATP and reduced ferredoxin to reduce ring D of protochlorophyllide (Pchlide) to form chlorophyllide a (Chlide). This reaction is light-independent. The NB-protein (BchN-BchB) is the catalytic component of the complex. The protein is Light-independent protochlorophyllide reductase subunit N of Rhodopseudomonas palustris (strain TIE-1).